A 269-amino-acid chain; its full sequence is Tropinone reductase homolog At2g29320 (269 aa).

19–43 provides a ligand contact to NADP(+); that stretch reads LVTGAASGIGYAIVEELAGFGAKIH. Ser152 serves as a coordination point for substrate. Tyr166 acts as the Proton acceptor in catalysis.

Belongs to the short-chain dehydrogenases/reductases (SDR) family. SDR65C subfamily.

This chain is Tropinone reductase homolog At2g29320, found in Arabidopsis thaliana (Mouse-ear cress).